A 499-amino-acid chain; its full sequence is Isoflavone 2'-hydroxylase (499 aa).

Cys-436 lines the heme pocket.

This sequence belongs to the cytochrome P450 family. Heme is required as a cofactor.

The protein localises to the membrane. The catalysed reaction is a 2'-unsubstituted isoflavone + reduced [NADPH--hemoprotein reductase] + O2 = a 2'-hydroxyisoflavone + oxidized [NADPH--hemoprotein reductase] + H2O + H(+). Catalyzes the hydroxylation of isoflavones, daidzein and formononetin, to yield 2'-hydroxyisoflavones, 2'-hydroxydaidzein, and 2'-hydroxyformononetin, respectively. The sequence is that of Isoflavone 2'-hydroxylase (CYP81E1) from Glycyrrhiza echinata (Licorice).